Here is a 335-residue protein sequence, read N- to C-terminus: Homeobox protein Hox-A1 (335 aa).

Residues 61–80 (IGSPHHHHHHHHRHPQPATY) form a disordered region. The segment covering 64 to 75 (PHHHHHHHHRHP) has biased composition (basic residues). The interval 75–203 (PQPATYQTSG…PASETSSPAQ (129 aa)) is interaction with OGT. The Antp-type hexapeptide motif lies at 204 to 209 (TFDWMK). The segment at residues 229–288 (PNAVRTNFTTKQLTELEKEFHFNKYLTRARRVEIAASLQLNETQVKIWFQNRRMKQKKRE) is a DNA-binding region (homeobox). Residues 281 to 335 (RMKQKKREKEGLLPISPATPPGNDEKAEESSEKSSSSPCVPSPGSSTSDTLTTSH) are disordered. A compositionally biased stretch (basic and acidic residues) spans 303-312 (NDEKAEESSE). Residues 313–328 (KSSSSPCVPSPGSSTS) are compositionally biased toward low complexity.

It belongs to the Antp homeobox family. Labial subfamily. In terms of assembly, interacts with OGT (via TPR repeats domain); the interaction takes place mainly in the nucleus. Forms a DNA-binding heterodimer with transcription factor PBX1.

The protein localises to the nucleus. Its function is as follows. Sequence-specific transcription factor. Regulates multiple developmental processes including brainstem, inner and outer ear, abducens nerve and cardiovascular development and morphogenesis as well as cognition and behavior. Also part of a developmental regulatory system that provides cells with specific positional identities on the anterior-posterior axis. Acts on the anterior body structures. Seems to act in the maintenance and/or generation of hindbrain segments. Activates transcription in the presence of PBX1A and PKNOX1. This is Homeobox protein Hox-A1 (HOXA1) from Homo sapiens (Human).